The chain runs to 96 residues: UPF0102 protein ML1607 (96 aa).

Belongs to the UPF0102 family.

The sequence is that of UPF0102 protein ML1607 from Mycobacterium leprae (strain TN).